Reading from the N-terminus, the 329-residue chain is MTVTIYDVAREARVSMATVSRVVNGNQNVKAETKNKVNEVIKRLNYRPNAVARGLASKKTTTVGVIIPDISNIYYSQLARGLEDIATMYKYHSIISNSDNDPEKEKEIFNNLLSKQVDGIIFLGGTITEEMKELINQSSVPVVVSGTNGKDAHIASVNIDFTEAAKEITGELIEKGAKSFALVGGEHSKKAQEDVLEGLTEVLNKNGLQLGDTLNCSGAESYKEGVKAFAKMKGNLPDAILCISDEEAIGIMHSAMDAGIKVPEELQIISFNNTRLVEMVRPQLSSVIQPLYDIGAVGMRLLTKYMNDEKIEEPNVVLPHRIEYRGTTK.

Residues 1–57 (MTVTIYDVAREARVSMATVSRVVNGNQNVKAETKNKVNEVIKRLNYRPNAVARGLAS) form the HTH lacI-type domain. The segment at residues 5–24 (IYDVAREARVSMATVSRVVN) is a DNA-binding region (H-T-H motif).

Functionally, global transcriptional regulator of carbon catabolite repression (CCR) and carbon catabolite activation (CCA), which ensures optimal energy usage under diverse conditions. The sequence is that of Catabolite control protein A (ccpA) from Staphylococcus aureus (strain COL).